Consider the following 295-residue polypeptide: Alpha-ketoglutarate-dependent dioxygenase alkB homolog 3 (295 aa).

The interval Met-1–Gln-48 is disordered. Residues Ser-22–Ser-35 show a composition bias toward low complexity. Substrate-binding positions include Trp-115 and Tyr-141 to Tyr-143. A Fe2OG dioxygenase domain is found at Thr-172–Tyr-278. A (4R)-5-hydroxyleucine; alternate modification is found at Leu-177. Position 177 is a (4R)-5-oxoleucine; alternate (Leu-177). Asn-179 to Tyr-181 is a binding site for 2-oxoglutarate. Fe cation contacts are provided by His-191 and Asp-193. Asp-194 lines the substrate pocket. His-257 provides a ligand contact to Fe cation. 2-oxoglutarate contacts are provided by residues Arg-269 to Arg-275 and Arg-275.

Belongs to the alkB family. In terms of assembly, interacts with the ASCC complex composed of ASCC1, ASCC2 and ASCC3. Interacts directly with ASCC3, and is thereby recruited to the ASCC complex. Interacts with OTUD4; the interaction is direct. Interacts with USP7 and USP9X. Fe(2+) is required as a cofactor. Post-translationally, ubiquitinated; undergoes 'Lys-48'-linked polyubiquitination. OTUD4 promotes USP7 and USP9X-dependent deubiquitination of 'Lys-48'-polyubiquitinated ALKBH3 promoting the repair of alkylated DNA lesions.

Its subcellular location is the nucleus. It is found in the cytoplasm. The catalysed reaction is an N(1)-methyladenosine in mRNA + 2-oxoglutarate + O2 = an adenosine in mRNA + formaldehyde + succinate + CO2. It catalyses the reaction a methylated nucleobase within DNA + 2-oxoglutarate + O2 = a nucleobase within DNA + formaldehyde + succinate + CO2. The enzyme catalyses an N(1)-methyl-2'-deoxyadenosine in single-stranded DNA + 2-oxoglutarate + O2 = a 2'-deoxyadenosine in single-stranded DNA + formaldehyde + succinate + CO2 + H(+). It carries out the reaction an N(3)-methyl-2'-deoxycytidine in single-stranded DNA + 2-oxoglutarate + O2 = a 2'-deoxycytidine in single-stranded DNA + formaldehyde + succinate + CO2 + H(+). The catalysed reaction is a 3,N(4)-etheno-2'-deoxycytidine in single-stranded DNA + 2-oxoglutarate + O2 + H2O = a 2'-deoxycytidine in single-stranded DNA + glyoxal + succinate + CO2. Activated by ascorbate. Functionally, dioxygenase that mediates demethylation of DNA and RNA containing 1-methyladenosine (m1A). Repairs alkylated DNA containing 1-methyladenosine (m1A) and 3-methylcytosine (m3C) by oxidative demethylation. Has a strong preference for single-stranded DNA. Able to process alkylated m3C within double-stranded regions via its interaction with ASCC3, which promotes DNA unwinding to generate single-stranded substrate needed for ALKBH3. Can repair exocyclic 3,N4-ethenocytosine adducs in single-stranded DNA. Also acts on RNA. Demethylates N(1)-methyladenosine (m1A) RNA, an epigenetic internal modification of messenger RNAs (mRNAs) highly enriched within 5'-untranslated regions (UTRs) and in the vicinity of start codons. Requires molecular oxygen, alpha-ketoglutarate and iron. This is Alpha-ketoglutarate-dependent dioxygenase alkB homolog 3 from Rattus norvegicus (Rat).